The following is a 334-amino-acid chain: Trans-3-hydroxy-L-proline dehydratase (334 aa).

The Proton acceptor role is filled by Cys-91. Residues Gly-92–His-93, Asp-250, and Gly-255–Thr-256 each bind substrate.

The protein belongs to the proline racemase family.

The enzyme catalyses trans-3-hydroxy-L-proline = 1-pyrroline-2-carboxylate + H2O. Catalyzes the dehydration of trans-3-hydroxy-L-proline (t3LHyp) to Delta(1)-pyrroline-2-carboxylate (Pyr2C). Is likely involved in a degradation pathway that converts t3LHyp to L-proline. Can also catalyze the epimerization of trans-4-hydroxy-L-proline (t4LHyp) to cis-4-hydroxy-D-proline (c4DHyp) in vitro. Displays no proline racemase activity. The chain is Trans-3-hydroxy-L-proline dehydratase from Bacillus thuringiensis subsp. konkukian (strain 97-27).